Consider the following 20-residue polypeptide: 23 kDa cell wall protein (20 aa).

Its subcellular location is the secreted. It is found in the cell wall. The polypeptide is 23 kDa cell wall protein (Arabidopsis thaliana (Mouse-ear cress)).